We begin with the raw amino-acid sequence, 146 residues long: MRVVLQRSKEASVTVDGEIVGQIPFGLTLLVGITHEDTEKDATYIAEKIANLRIFEDESGKMNHSVLDVEGQVLSISQFTLYGDCRKGRRPNFMDAAKPDYAERLYDFFNEEVRKQGLHVETGKFGAMMDVSLINDGPVTLIVESK.

The short motif at 137–138 (GP) is the Gly-cisPro motif, important for rejection of L-amino acids element.

The protein belongs to the DTD family. In terms of assembly, homodimer.

The protein resides in the cytoplasm. It catalyses the reaction glycyl-tRNA(Ala) + H2O = tRNA(Ala) + glycine + H(+). The enzyme catalyses a D-aminoacyl-tRNA + H2O = a tRNA + a D-alpha-amino acid + H(+). Functionally, an aminoacyl-tRNA editing enzyme that deacylates mischarged D-aminoacyl-tRNAs. Also deacylates mischarged glycyl-tRNA(Ala), protecting cells against glycine mischarging by AlaRS. Acts via tRNA-based rather than protein-based catalysis; rejects L-amino acids rather than detecting D-amino acids in the active site. By recycling D-aminoacyl-tRNA to D-amino acids and free tRNA molecules, this enzyme counteracts the toxicity associated with the formation of D-aminoacyl-tRNA entities in vivo and helps enforce protein L-homochirality. In Bacillus cereus (strain Q1), this protein is D-aminoacyl-tRNA deacylase.